The chain runs to 199 residues: Peptidyl-prolyl cis-trans isomerase CYP22 (199 aa).

The PPIase cyclophilin-type domain occupies 35-198; that stretch reads FFDVSIGGIP…LAVVITECGE (164 aa).

This sequence belongs to the cyclophilin-type PPIase family. As to expression, ubiquitous.

The enzyme catalyses [protein]-peptidylproline (omega=180) = [protein]-peptidylproline (omega=0). Functionally, PPIases accelerate the folding of proteins. It catalyzes the cis-trans isomerization of proline imidic peptide bonds in oligopeptides. This chain is Peptidyl-prolyl cis-trans isomerase CYP22 (CYP22), found in Arabidopsis thaliana (Mouse-ear cress).